Here is a 550-residue protein sequence, read N- to C-terminus: Arginine--tRNA ligase (550 aa).

A 'HIGH' region motif is present at residues 130 to 140 (ANPTGPIHIGG).

This sequence belongs to the class-I aminoacyl-tRNA synthetase family. As to quaternary structure, monomer.

The protein resides in the cytoplasm. It carries out the reaction tRNA(Arg) + L-arginine + ATP = L-arginyl-tRNA(Arg) + AMP + diphosphate. In Mycolicibacterium paratuberculosis (strain ATCC BAA-968 / K-10) (Mycobacterium paratuberculosis), this protein is Arginine--tRNA ligase.